The sequence spans 543 residues: Protein phosphatase 1G (543 aa).

Gly-2 carries N-myristoyl glycine lipidation. Arg-22 is modified (omega-N-methylarginine). Positions 26-503 (PYGFSAMQGW…DNMTCIIICF (478 aa)) constitute a PPM-type phosphatase domain. The Mn(2+) site is built by Asp-60 and Gly-61. Disordered regions lie at residues 116 to 139 (QIAG…DVDN) and 163 to 326 (NCHK…SDSG). Thr-122 is subject to Phosphothreonine. Over residues 123 to 139 (EDEDEKEKVADEDDVDN) the composition is skewed to acidic residues. Ser-183 carries the phosphoserine modification. Acidic residues predominate over residues 259–310 (DSEDESDEAEEEEEDSEECSEEEDGYSSEEAENEEDEDDTEEAEEDDEEEEM). Lys-381 carries the post-translational modification N6-acetyllysine. Mn(2+) contacts are provided by Asp-439 and Asp-494. The tract at residues 508–543 (TAAPQPESGKRKLEEVLSTEGAEENGNSDKKKAKRD) is disordered. Ser-525 carries the phosphoserine modification.

It belongs to the PP2C family. As to quaternary structure, interacts with NOL3; may dephosphorylate NOL3. Requires Mg(2+) as cofactor. Mn(2+) is required as a cofactor.

The protein localises to the cytoplasm. It is found in the membrane. The catalysed reaction is O-phospho-L-seryl-[protein] + H2O = L-seryl-[protein] + phosphate. The enzyme catalyses O-phospho-L-threonyl-[protein] + H2O = L-threonyl-[protein] + phosphate. The chain is Protein phosphatase 1G (PPM1G) from Bos taurus (Bovine).